A 209-amino-acid polypeptide reads, in one-letter code: Elongation factor Ts, chloroplastic (209 aa).

This sequence belongs to the EF-Ts family.

Its subcellular location is the plastid. It is found in the chloroplast. Associates with the EF-Tu.GDP complex and induces the exchange of GDP to GTP. It remains bound to the aminoacyl-tRNA.EF-Tu.GTP complex up to the GTP hydrolysis stage on the ribosome. The sequence is that of Elongation factor Ts, chloroplastic (tsf) from Cyanidioschyzon merolae (strain NIES-3377 / 10D) (Unicellular red alga).